The sequence spans 1798 residues: Laminin subunit beta-2 (1798 aa).

An N-terminal signal peptide occupies residues 1 to 32 (MELTSRERGRGQPLPWELRLGLLLSVLAATLA). The Laminin N-terminal domain maps to 43-282 (SRGSCYPATG…ALYELVVRGN (240 aa)). Residue Asn248 is glycosylated (N-linked (GlcNAc...) asparagine). 19 disulfide bridges follow: Cys283–Cys292, Cys285–Cys310, Cys312–Cys321, Cys324–Cys344, Cys347–Cys356, Cys349–Cys374, Cys377–Cys386, Cys389–Cys407, Cys410–Cys423, Cys412–Cys438, Cys440–Cys449, Cys452–Cys467, Cys470–Cys484, Cys472–Cys491, Cys493–Cys502, Cys505–Cys519, Cys522–Cys534, Cys524–Cys541, and Cys543–Cys552. Laminin EGF-like domains lie at 283 to 346 (CFCY…ACRK), 347 to 409 (CECH…VCRS), 410 to 469 (CDCD…GCRR), and 470 to 521 (CQCN…GCRP). Asn368 is a glycosylation site (N-linked (GlcNAc...) asparagine). The 31-residue stretch at 522-552 (CDCDVGGALDPQCDEGTGQCHCRQHMVGRRC) folds into the Laminin EGF-like 5; truncated domain. Residues 561–777 (RPFLDHLIWE…LLISLSTLIY (217 aa)) enclose the Laminin IV type B domain. Cystine bridges form between Cys783-Cys795, Cys785-Cys802, Cys804-Cys813, Cys816-Cys828, Cys831-Cys843, Cys833-Cys850, Cys852-Cys861, Cys864-Cys874, Cys877-Cys886, Cys879-Cys893, Cys896-Cys905, Cys908-Cys924, Cys927-Cys943, Cys929-Cys954, Cys956-Cys965, Cys968-Cys983, Cys986-Cys1000, Cys988-Cys1007, Cys1010-Cys1019, Cys1022-Cys1035, Cys1038-Cys1058, Cys1040-Cys1065, Cys1067-Cys1076, Cys1079-Cys1092, Cys1095-Cys1107, Cys1097-Cys1114, Cys1116-Cys1125, Cys1128-Cys1140, Cys1143-Cys1155, Cys1145-Cys1162, Cys1164-Cys1173, and Cys1176-Cys1187. Laminin EGF-like domains are found at residues 783-830 (CQCN…GCQA), 831-876 (CQCS…SCRP), 877-926 (CVCN…QCRP), 927-985 (CPCP…RCQL), 986-1037 (CECS…SCHR), 1038-1094 (CTCN…GCQP), 1095-1142 (CACH…QCHA), and 1143-1189 (CDCD…ACHP). Asn1085 carries an N-linked (GlcNAc...) asparagine glycan. The tract at residues 1190-1409 (CHACFGDWDR…LSLTDINELV (220 aa)) is domain II. 3 N-linked (GlcNAc...) asparagine glycosylation sites follow: Asn1249, Asn1308, and Asn1348. Residues 1253-1319 (ASTAQLVEAT…TLRQLDQHLD (67 aa)) are a coiled coil. The tract at residues 1338–1364 (SQSAEAERRANTSALAVPSPVSNSASA) is disordered. Residues 1350–1363 (SALAVPSPVSNSAS) are compositionally biased toward low complexity. The tract at residues 1410 to 1442 (CGAPGDAPCATSPCGGAGCRDEDGQPRCGGLSC) is domain alpha. The segment at 1443–1798 (NGAAATADLA…LQVQIYNTCQ (356 aa)) is domain I. The stretch at 1472-1526 (SILSRVAETRRQASEAQQRAQAALDKANASRGQVEQANQELQELIQSVKDFLNQE) forms a coiled coil. N-linked (GlcNAc...) asparagine glycosylation occurs at Asn1499. Ser1532 carries the post-translational modification Phosphoserine; by FAM20C. A coiled-coil region spans residues 1577–1790 (VGDVRRAEQL…RSVLQAINLQ (214 aa)).

In terms of assembly, laminin is a complex glycoprotein, consisting of three different polypeptide chains (alpha, beta, gamma), which are bound to each other by disulfide bonds into a cross-shaped molecule comprising one long and three short arms with globules at each end. Beta-2 is a subunit of laminin-3 (laminin-121 or S-laminin), laminin-4 (laminin-221 or S-merosin), laminin-7 (laminin-321 or KS-laminin), laminin-9 (laminin-421), laminin-11 (laminin-521), laminin-14 (laminin-423) and laminin-15 (laminin-523).

The protein resides in the secreted. Its subcellular location is the extracellular space. The protein localises to the extracellular matrix. It is found in the basement membrane. Binding to cells via a high affinity receptor, laminin is thought to mediate the attachment, migration and organization of cells into tissues during embryonic development by interacting with other extracellular matrix components. The polypeptide is Laminin subunit beta-2 (LAMB2) (Homo sapiens (Human)).